A 76-amino-acid polypeptide reads, in one-letter code: Omega-agatoxin-Aa3a (76 aa).

Disulfide bonds link C2/C19, C9/C25, C16/C52, C18/C40, C27/C38, and C59/C67.

The protein belongs to the neurotoxin 04 (omega-agtx) family. 03 (type II/III omega-agtx) subfamily. As to expression, expressed by the venom gland.

It is found in the secreted. Its function is as follows. Omega-agatoxin are antagonist of voltage-gated calcium channels. They block insect neuromuscular transmission presynaptically. Potent blocker of N- (Cav2.2/CACNA1B) and L-type (Cav1/CACNA1) calcium channels. This chain is Omega-agatoxin-Aa3a, found in Agelenopsis aperta (North American funnel-web spider).